The chain runs to 201 residues: Recombination protein RecR (201 aa).

A C4-type zinc finger spans residues 57–72 (CCDCRTFTEEERCTIC). Positions 81-176 (GQICVVESPA…AASRIAHGVP (96 aa)) constitute a Toprim domain.

This sequence belongs to the RecR family.

Its function is as follows. May play a role in DNA repair. It seems to be involved in an RecBC-independent recombinational process of DNA repair. It may act with RecF and RecO. This Proteus mirabilis (strain HI4320) protein is Recombination protein RecR.